A 367-amino-acid polypeptide reads, in one-letter code: Probable glutamine synthetase (367 aa).

The GS beta-grasp domain maps to 30 to 110 (IQATYVWIDG…VMCDTLDHQM (81 aa)). The region spanning 117–367 (HRQACAEIMH…TAMIAQSILF (251 aa)) is the GS catalytic domain.

The protein belongs to the glutamine synthetase family. Homooctamer.

It localises to the cytoplasm. It catalyses the reaction L-glutamate + NH4(+) + ATP = L-glutamine + ADP + phosphate + H(+). The protein is Probable glutamine synthetase (gln-2) of Caenorhabditis elegans.